Consider the following 65-residue polypeptide: Conotoxin Lt5.1 (65 aa).

The first 19 residues, 1-19 (MRCLPVFIILLLLIPSAPS), serve as a signal peptide directing secretion. Positions 20 to 48 (VDAQRKTKDDVPLASFHDNAKRTLKRLWN) are excised as a propeptide.

The protein belongs to the conotoxin T superfamily. Contains 2 disulfide bonds that can be either 'C1-C3, C2-C4' or 'C1-C4, C2-C3', since these disulfide connectivities have been observed for conotoxins with cysteine framework V (for examples, see AC P0DQQ7 and AC P81755). As to expression, expressed by the venom duct.

The protein resides in the secreted. The chain is Conotoxin Lt5.1 from Conus litteratus (Lettered cone).